The chain runs to 104 residues: Large ribosomal subunit protein bL21 (104 aa).

It belongs to the bacterial ribosomal protein bL21 family. As to quaternary structure, part of the 50S ribosomal subunit. Contacts protein L20.

Its function is as follows. This protein binds to 23S rRNA in the presence of protein L20. The sequence is that of Large ribosomal subunit protein bL21 from Francisella philomiragia subsp. philomiragia (strain ATCC 25017 / CCUG 19701 / FSC 153 / O#319-036).